The chain runs to 244 residues: NAD(P)H-quinone oxidoreductase subunit K (244 aa).

4 residues coordinate [4Fe-4S] cluster: Cys60, Cys61, Cys125, and Cys156. Positions 213-244 are disordered; it reads KSEKSIESSKLNPVEESSENIYETNSIDEVIK. The span at 231–244 shows a compositional bias: polar residues; that stretch reads ENIYETNSIDEVIK.

Belongs to the complex I 20 kDa subunit family. In terms of assembly, NDH-1 can be composed of about 15 different subunits; different subcomplexes with different compositions have been identified which probably have different functions. It depends on [4Fe-4S] cluster as a cofactor.

Its subcellular location is the cellular thylakoid membrane. It catalyses the reaction a plastoquinone + NADH + (n+1) H(+)(in) = a plastoquinol + NAD(+) + n H(+)(out). It carries out the reaction a plastoquinone + NADPH + (n+1) H(+)(in) = a plastoquinol + NADP(+) + n H(+)(out). Its function is as follows. NDH-1 shuttles electrons from an unknown electron donor, via FMN and iron-sulfur (Fe-S) centers, to quinones in the respiratory and/or the photosynthetic chain. The immediate electron acceptor for the enzyme in this species is believed to be plastoquinone. Couples the redox reaction to proton translocation, and thus conserves the redox energy in a proton gradient. Cyanobacterial NDH-1 also plays a role in inorganic carbon-concentration. The polypeptide is NAD(P)H-quinone oxidoreductase subunit K (Prochlorococcus marinus subsp. pastoris (strain CCMP1986 / NIES-2087 / MED4)).